The primary structure comprises 138 residues: Basic phospholipase A2 homolog TM-N49 (138 aa).

Residues 1 to 16 (MRTLWIMAVLLLGVEG) form the signal peptide. 7 disulfides stabilise this stretch: cysteine 42–cysteine 131, cysteine 44–cysteine 60, cysteine 59–cysteine 111, cysteine 65–cysteine 138, cysteine 66–cysteine 104, cysteine 73–cysteine 97, and cysteine 91–cysteine 102.

It belongs to the phospholipase A2 family. Group II subfamily. N49 sub-subfamily. In terms of assembly, homodimer; non-covalently linked. Expressed by the venom gland.

It is found in the secreted. Its function is as follows. Snake venom phospholipase A2 (PLA2) that exhibits potent myotoxic activity causing inflammatory cell infiltration, severe myoedema, myonecrosis and myolysis in the gastrocnemius muscles of BALB/c mice. In Protobothrops mucrosquamatus (Taiwan habu), this protein is Basic phospholipase A2 homolog TM-N49.